A 213-amino-acid chain; its full sequence is MELHVLNHPLVEHKLTVLRDKNTPSSTFRELVSELVMLEAYEATRNLSVVAAPIETPVAPMTGKKLASPRPIIVPVLRAGLGMLDGMTRLIPTAEVGFLGMKRDEEHPTQQVTYANRLPEDLSGRQCFLIDPMLATGGTLVAATHYLAERGAKDVTAINIIAAPEGIKYVEEHIDPSIDFKVVVCAVDERLNDKCYIVPGLGDAGDRLYGVID.

5-phospho-alpha-D-ribose 1-diphosphate contacts are provided by residues Arg78, Arg103, and 131-139 (DPMLATGGT). Uracil-binding positions include Ile197 and 202 to 204 (GDA). 5-phospho-alpha-D-ribose 1-diphosphate is bound at residue Asp203.

It belongs to the UPRTase family. Mg(2+) serves as cofactor.

The catalysed reaction is UMP + diphosphate = 5-phospho-alpha-D-ribose 1-diphosphate + uracil. It functions in the pathway pyrimidine metabolism; UMP biosynthesis via salvage pathway; UMP from uracil: step 1/1. With respect to regulation, allosterically activated by GTP. Catalyzes the conversion of uracil and 5-phospho-alpha-D-ribose 1-diphosphate (PRPP) to UMP and diphosphate. In Bifidobacterium longum (strain DJO10A), this protein is Uracil phosphoribosyltransferase.